Consider the following 297-residue polypeptide: ClpXP adapter protein SpxH (297 aa).

The protein belongs to the SpxH family. Interacts with Spx.

The protein resides in the cytoplasm. Adapter protein required for efficient degradation of Spx by ClpXP under non-stress conditions. Interaction with Spx stabilizes Spx and exposes the C-terminus of Spx for recognition and proteolysis by ClpXP. The polypeptide is ClpXP adapter protein SpxH (Bacillus thuringiensis subsp. konkukian (strain 97-27)).